Consider the following 319-residue polypeptide: tRNA uridine(34) hydroxylase (319 aa).

In terms of domain architecture, Rhodanese spans 124–218 (LDEDTVILDA…YGKNEETKGE (95 aa)). The Cysteine persulfide intermediate role is filled by C178.

It belongs to the TrhO family.

The enzyme catalyses uridine(34) in tRNA + AH2 + O2 = 5-hydroxyuridine(34) in tRNA + A + H2O. Its function is as follows. Catalyzes oxygen-dependent 5-hydroxyuridine (ho5U) modification at position 34 in tRNAs. This Listeria monocytogenes serovar 1/2a (strain ATCC BAA-679 / EGD-e) protein is tRNA uridine(34) hydroxylase.